A 229-amino-acid polypeptide reads, in one-letter code: Large ribosomal subunit protein uL1 (229 aa).

The protein belongs to the universal ribosomal protein uL1 family. Part of the 50S ribosomal subunit.

In terms of biological role, binds directly to 23S rRNA. The L1 stalk is quite mobile in the ribosome, and is involved in E site tRNA release. Protein L1 is also a translational repressor protein, it controls the translation of the L11 operon by binding to its mRNA. The sequence is that of Large ribosomal subunit protein uL1 from Streptococcus pneumoniae serotype 2 (strain D39 / NCTC 7466).